A 318-amino-acid polypeptide reads, in one-letter code: Cytochrome c biogenesis protein CcsA (318 aa).

8 helical membrane passes run 17–37, 45–65, 75–95, 104–124, 149–169, 224–244, 258–275, and 287–307; these read VLAL…ISFW, SAVV…QLVL, ISNL…AQLL, IVSA…SFAL, VIMC…AVLF, TITV…VWAN, TWAL…HTRF, and VAVA…LLGI.

The protein belongs to the CcmF/CycK/Ccl1/NrfE/CcsA family. In terms of assembly, may interact with ccs1.

It is found in the cellular thylakoid membrane. Required during biogenesis of c-type cytochromes (cytochrome c6 and cytochrome f) at the step of heme attachment. This Prochlorococcus marinus (strain MIT 9313) protein is Cytochrome c biogenesis protein CcsA.